Reading from the N-terminus, the 517-residue chain is Crotonobetaine/carnitine--CoA ligase (517 aa).

This sequence belongs to the ATP-dependent AMP-binding enzyme family.

It catalyses the reaction 4-(trimethylamino)butanoate + ATP + CoA = 4-(trimethylamino)butanoyl-CoA + AMP + diphosphate. The catalysed reaction is crotonobetaine + ATP + CoA = crotonobetainyl-CoA + AMP + diphosphate. The enzyme catalyses (R)-carnitine + ATP + CoA = (R)-carnitinyl-CoA + AMP + diphosphate. Its pathway is amine and polyamine metabolism; carnitine metabolism. In terms of biological role, catalyzes the transfer of CoA to carnitine, generating the initial carnitinyl-CoA needed for the CaiB reaction cycle. Also has activity toward crotonobetaine and gamma-butyrobetaine. This chain is Crotonobetaine/carnitine--CoA ligase, found in Salmonella paratyphi C (strain RKS4594).